We begin with the raw amino-acid sequence, 144 residues long: uncharacterized protein (144 aa).

An HTH lysR-type domain is found at 1–58 (MDLASLNAFIAVAETGSFSEAGERLHLTQPAVSKRIAALEQQLQVRLFDRLGREVRLT). The segment at residues 18-38 (FSEAGERLHLTQPAVSKRIAA) is a DNA-binding region (H-T-H motif).

Belongs to the LysR transcriptional regulatory family.

This is an uncharacterized protein from Azotobacter vinelandii.